The sequence spans 104 residues: Probable RNA-binding protein PA4753 (104 aa).

The CRM domain occupies Met-1–Asn-97.

The chain is Probable RNA-binding protein PA4753 from Pseudomonas aeruginosa (strain ATCC 15692 / DSM 22644 / CIP 104116 / JCM 14847 / LMG 12228 / 1C / PRS 101 / PAO1).